A 297-amino-acid chain; its full sequence is 1D-myo-inositol 2-acetamido-2-deoxy-alpha-D-glucopyranoside deacetylase (297 aa).

Zn(2+)-binding residues include H11, D14, and H154.

Belongs to the MshB deacetylase family. The cofactor is Zn(2+).

The catalysed reaction is 1D-myo-inositol 2-acetamido-2-deoxy-alpha-D-glucopyranoside + H2O = 1D-myo-inositol 2-amino-2-deoxy-alpha-D-glucopyranoside + acetate. Catalyzes the deacetylation of 1D-myo-inositol 2-acetamido-2-deoxy-alpha-D-glucopyranoside (GlcNAc-Ins) in the mycothiol biosynthesis pathway. In Tsukamurella paurometabola (strain ATCC 8368 / DSM 20162 / CCUG 35730 / CIP 100753 / JCM 10117 / KCTC 9821 / NBRC 16120 / NCIMB 702349 / NCTC 13040) (Corynebacterium paurometabolum), this protein is 1D-myo-inositol 2-acetamido-2-deoxy-alpha-D-glucopyranoside deacetylase.